Here is a 263-residue protein sequence, read N- to C-terminus: Fibroblast growth factor 23 (263 aa).

The signal sequence occupies residues 1–23 (MDVNRRIGVKDALLALLLALLQG). Cysteines 103 and 121 form a disulfide. The N-linked (GlcNAc...) asparagine glycan is linked to asparagine 124. A compositionally biased stretch (basic and acidic residues) spans 198–211 (VGRAEEGSDSRALQ). Residues 198–263 (VGRAEEGSDS…GSPRSSGTVG (66 aa)) are disordered. Residues 212-226 (EDDADLEVETEVEVG) show a composition bias toward acidic residues. Basic and acidic residues predominate over residues 227 to 245 (DDGRNASRERLQAPSDHDP). N-linked (GlcNAc...) asparagine glycosylation is present at asparagine 231. The segment covering 249 to 263 (FSSNPGSPRSSGTVG) has biased composition (polar residues).

The protein belongs to the heparin-binding growth factors family.

Its subcellular location is the secreted. The polypeptide is Fibroblast growth factor 23 (fgf23) (Tetraodon nigroviridis (Spotted green pufferfish)).